Consider the following 802-residue polypeptide: MAATRIQPSTREIFTTLEYGPVPESHACALAWLDTHNRLLGHYVNGMWLKPEHRNPAPCQDPITGENLASCLQAEAEDISAAVEAARITFKTWSQLPGTARGQHLTRLAKVIQKHQRLLWTLESLVTGRAVREVRDGDIPLAQQLLHYHALQAHAQDSALADWEPLGVIGLILPTSFSFLDMMWRVCPALAMGCTVVALVPPSFPTPLLLAQLAGELGSFPGILNVVCGPVSLGPVLASQPGVQKVAFCGAVEEGRALRQTLAGRGATLGLALGTESLLLLTDSADVDSAVEGVVDAVWSDRSLGGLRLLIQESVWDEAMKRLQARMAQIRSGKGLDGAVDMGARGAAARDLAQSFVDEAQSQGGQVFQAGDMPSNSPFFSPTLVSGLPPAAPCAQAEVPWPVVMASPFRTVKEALALANGTPRGGSASVWSERLGQALELGYGLQVGTVWINAHGLRDPAVPTGGCKESGSSWHGGPDGLYEYLQLLGTPYRESFLCESLNYDTFGLAVSSSLPSGPETGPSPAPPYGLFVRGRFQSPGTQSSRPIKDSSGKVSSYVAEGGAKDIRGAVEAAHQAAPGWGAQSPRARASLLWALAAALERRKQVLAAQLERHGAAPTVAETEVELSVRRLQTWATRVQDQGQTLQVTGLRGPVLRLREPLGVLAVVCPDEWPMLAFVSLLAPALAHGNAVVLVPSGSCPLLALEACQDIAALFPAGLVNVVTGDRDHLTRCLALHQDVQAMWYFGSAQGSQFVEWASAGNLKPVWVNRDFPRAWDVEVQGSEQELSLHAARTKALWLPMGD.

A disordered region spans residues 513–554; the sequence is SLPSGPETGPSPAPPYGLFVRGRFQSPGTQSSRPIKDSSGKV.

This sequence belongs to the aldehyde dehydrogenase family. In terms of assembly, interacts with SPG21.

The protein is Aldehyde dehydrogenase family 16 member A1 (Aldh16a1) of Rattus norvegicus (Rat).